Reading from the N-terminus, the 149-residue chain is Transcriptional regulator MraZ (149 aa).

2 consecutive SpoVT-AbrB domains span residues 7-54 and 83-126; these read KYVN…GISH and AVQL…QPQN.

Belongs to the MraZ family. In terms of assembly, forms oligomers.

The protein resides in the cytoplasm. The protein localises to the nucleoid. The sequence is that of Transcriptional regulator MraZ from Rickettsia peacockii (strain Rustic).